A 931-amino-acid polypeptide reads, in one-letter code: Protein translocase subunit SecA (931 aa).

Residues Q87, 105-109 (GEGKT), and D515 contribute to the ATP site. Positions 915, 917, 926, and 927 each coordinate Zn(2+).

This sequence belongs to the SecA family. As to quaternary structure, monomer and homodimer. Part of the essential Sec protein translocation apparatus which comprises SecA, SecYEG and auxiliary proteins SecDF-YajC and YidC. It depends on Zn(2+) as a cofactor.

It is found in the cell inner membrane. Its subcellular location is the cytoplasm. The catalysed reaction is ATP + H2O + cellular proteinSide 1 = ADP + phosphate + cellular proteinSide 2.. In terms of biological role, part of the Sec protein translocase complex. Interacts with the SecYEG preprotein conducting channel. Has a central role in coupling the hydrolysis of ATP to the transfer of proteins into and across the cell membrane, serving both as a receptor for the preprotein-SecB complex and as an ATP-driven molecular motor driving the stepwise translocation of polypeptide chains across the membrane. The protein is Protein translocase subunit SecA of Burkholderia pseudomallei (strain 1106a).